A 377-amino-acid chain; its full sequence is Nitric oxide reductase FlRd-NAD(+) reductase (377 aa).

The protein belongs to the FAD-dependent oxidoreductase family. FAD is required as a cofactor.

It localises to the cytoplasm. The catalysed reaction is 2 reduced [nitric oxide reductase rubredoxin domain] + NAD(+) + H(+) = 2 oxidized [nitric oxide reductase rubredoxin domain] + NADH. It functions in the pathway nitrogen metabolism; nitric oxide reduction. Functionally, one of at least two accessory proteins for anaerobic nitric oxide (NO) reductase. Reduces the rubredoxin moiety of NO reductase. The chain is Nitric oxide reductase FlRd-NAD(+) reductase from Escherichia coli O127:H6 (strain E2348/69 / EPEC).